The primary structure comprises 455 residues: UDP-N-acetylmuramoylalanine--D-glutamate ligase (455 aa).

Gly119 to Thr125 provides a ligand contact to ATP.

The protein belongs to the MurCDEF family.

It is found in the cytoplasm. The enzyme catalyses UDP-N-acetyl-alpha-D-muramoyl-L-alanine + D-glutamate + ATP = UDP-N-acetyl-alpha-D-muramoyl-L-alanyl-D-glutamate + ADP + phosphate + H(+). Its pathway is cell wall biogenesis; peptidoglycan biosynthesis. Cell wall formation. Catalyzes the addition of glutamate to the nucleotide precursor UDP-N-acetylmuramoyl-L-alanine (UMA). The protein is UDP-N-acetylmuramoylalanine--D-glutamate ligase of Listeria monocytogenes serotype 4b (strain F2365).